The following is a 1249-amino-acid chain: AMB antimetabolite synthetase AmbB (1249 aa).

An adenylation region spans residues 245 to 633 (FEAQARRTPQ…LGRLDDQVKF (389 aa)). The segment at 716 to 735 (IDRKALPRPQATGAEPQALP) is disordered. The Carrier domain maps to 734 to 809 (LPSDPLEQAL…ALLELLRQAA (76 aa)). At Ser768 the chain carries O-(pantetheine 4'-phosphoryl)serine. Residues 823–1150 (GLSLAERRLW…CVTQALRQRG (328 aa)) form a condensation region.

The protein belongs to the NRP synthetase family. It depends on pantetheine 4'-phosphate as a cofactor.

The enzyme catalyses holo-[peptidyl-carrier protein] + L-alanine + ATP = L-alanyl-[peptidyl-carrier protein] + AMP + diphosphate. Its function is as follows. Involved in the biosynthesis of the antimetabolite L-2-amino-4-methoxy-trans-3-butenoic acid (AMB), a non-proteinogenic amino acid which is toxic for prokaryotes and eukaryotes. Adenylates L-alanine and loads it onto its peptidyl carrier domain via a thioester linkage to the phosphopanthetheine moiety. In addition, loads activated L-Ala in trans onto the second carrier domain of AmbE. Can also activate L-Ser, Gly and D-Ala, albeit to a lower extent. The condensation domain of AmbB probably condenses the activated L-Ala and the L-Glu loaded on AmbE to form a L-Glu-L-Ala dipeptide at the first carrier domain of AmbE. The sequence is that of AMB antimetabolite synthetase AmbB from Pseudomonas aeruginosa (strain ATCC 15692 / DSM 22644 / CIP 104116 / JCM 14847 / LMG 12228 / 1C / PRS 101 / PAO1).